Reading from the N-terminus, the 427-residue chain is MNSTPVSELSQLIQFTVDFNDLQPELNFSPAEITCILSHERPVLLLITDGTENNAECVTLVGHVLKNKKVIKINVFPMIQSINFVNIFALPIFNITSSLLIQDNCYFKENMDPLRFHQFAYLEKGLGTTPIILYSVKNGDLIVNATVTKITWEKNEFQPLLKNSNDQKLETMYCIFTFNTTYCKYWNVFFASATPICNVEMISEHNLSVYKIEYRSPVLFVFLRYLKVMNSRFCVDECSLRLRLSKPNMQSVALNICMPYFNISEEFKTMEIYFPERMTLTPNHITQINLRGTFENPAAVGLFIPKKSNVLSFPFIWQPRETFRIYVYCRNETFVTEHDIIGHVYFISREQFPHSFHPTAHADCKSKVEAAFNSFRINFLGNDFFSDSLPILTVHPMTDFPYEQIQETENIRHNSMNITPRFKRMQL.

This is an uncharacterized protein from Human herpesvirus 7 (strain JI) (HHV-7).